Here is a 285-residue protein sequence, read N- to C-terminus: Bifunctional protein FolD 2 (285 aa).

Residues 164–166 (GRS), S189, and V230 contribute to the NADP(+) site.

The protein belongs to the tetrahydrofolate dehydrogenase/cyclohydrolase family. Homodimer.

It catalyses the reaction (6R)-5,10-methylene-5,6,7,8-tetrahydrofolate + NADP(+) = (6R)-5,10-methenyltetrahydrofolate + NADPH. The enzyme catalyses (6R)-5,10-methenyltetrahydrofolate + H2O = (6R)-10-formyltetrahydrofolate + H(+). It participates in one-carbon metabolism; tetrahydrofolate interconversion. In terms of biological role, catalyzes the oxidation of 5,10-methylenetetrahydrofolate to 5,10-methenyltetrahydrofolate and then the hydrolysis of 5,10-methenyltetrahydrofolate to 10-formyltetrahydrofolate. The chain is Bifunctional protein FolD 2 from Geobacter sulfurreducens (strain ATCC 51573 / DSM 12127 / PCA).